The sequence spans 427 residues: Serine--tRNA ligase (427 aa).

Residue 236–238 (TAE) coordinates L-serine. An ATP-binding site is contributed by 267–269 (RRE). Residue Glu290 coordinates L-serine. ATP is bound at residue 354–357 (EISS). Ser390 contacts L-serine.

This sequence belongs to the class-II aminoacyl-tRNA synthetase family. Type-1 seryl-tRNA synthetase subfamily. As to quaternary structure, homodimer. The tRNA molecule binds across the dimer.

The protein resides in the cytoplasm. It carries out the reaction tRNA(Ser) + L-serine + ATP = L-seryl-tRNA(Ser) + AMP + diphosphate + H(+). It catalyses the reaction tRNA(Sec) + L-serine + ATP = L-seryl-tRNA(Sec) + AMP + diphosphate + H(+). Its pathway is aminoacyl-tRNA biosynthesis; selenocysteinyl-tRNA(Sec) biosynthesis; L-seryl-tRNA(Sec) from L-serine and tRNA(Sec): step 1/1. Catalyzes the attachment of serine to tRNA(Ser). Is also able to aminoacylate tRNA(Sec) with serine, to form the misacylated tRNA L-seryl-tRNA(Sec), which will be further converted into selenocysteinyl-tRNA(Sec). The sequence is that of Serine--tRNA ligase from Picosynechococcus sp. (strain ATCC 27264 / PCC 7002 / PR-6) (Agmenellum quadruplicatum).